Reading from the N-terminus, the 496-residue chain is Probable cytosol aminopeptidase (496 aa).

The Mn(2+) site is built by Lys-268 and Asp-273. Lys-280 is a catalytic residue. Mn(2+) is bound by residues Asp-291, Asp-350, and Glu-352. Arg-354 is a catalytic residue.

This sequence belongs to the peptidase M17 family. Mn(2+) is required as a cofactor.

Its subcellular location is the cytoplasm. The catalysed reaction is Release of an N-terminal amino acid, Xaa-|-Yaa-, in which Xaa is preferably Leu, but may be other amino acids including Pro although not Arg or Lys, and Yaa may be Pro. Amino acid amides and methyl esters are also readily hydrolyzed, but rates on arylamides are exceedingly low.. It catalyses the reaction Release of an N-terminal amino acid, preferentially leucine, but not glutamic or aspartic acids.. Its function is as follows. Presumably involved in the processing and regular turnover of intracellular proteins. Catalyzes the removal of unsubstituted N-terminal amino acids from various peptides. The sequence is that of Probable cytosol aminopeptidase from Thioalkalivibrio sulfidiphilus (strain HL-EbGR7).